The sequence spans 291 residues: B-lymphocyte antigen CD20 (291 aa).

At 1-44 (MSGPFPAEPTKGPLAMQPAPKVNLKRTSSLVGPTQSFFMRESKA) the chain is on the cytoplasmic side. A Phosphoserine modification is found at S29. The helical transmembrane segment at 45 to 65 (LGAVQIMNGLFHITLGGLLMI) threads the bilayer. At 66 to 68 (PTG) the chain is on the extracellular side. Residues 69–89 (VFAPICLSVWYPLWGGIMYII) form a helical membrane-spanning segment. Topologically, residues 90 to 111 (SGSLLAAAAEKTSRKSLVKAKV) are cytoplasmic. The chain crosses the membrane as a helical span at residues 112-132 (IMSSLSLFAAISGIILSIMDI). The Extracellular portion of the chain corresponds to 133-182 (LNMTLSHFLKMRRLELIQTSKPYVDIYDCEPSNSSEKNSPSTQYCNSIQS). Residues 183-203 (VFLGILSAMLISAFFQKLVTA) traverse the membrane as a helical segment. The Cytoplasmic segment spans residues 204–291 (GIVENEWKRM…SLPVENEIAP (88 aa)). C214 carries the S-palmitoyl cysteine lipid modification. At S219 the chain carries Phosphoserine. T233 bears the Phosphothreonine mark. Residues 261 to 270 (VQEEEEEEAE) are compositionally biased toward acidic residues. A disordered region spans residues 261 to 291 (VQEEEEEEAEINFPAPPQEQESLPVENEIAP).

The protein belongs to the MS4A family. As to quaternary structure, forms homotetramers. Interacts with the heavy and light chains of cell surface IgM, the antigen-binding components of the BCR. Phosphorylated.

The protein localises to the cell membrane. Functionally, B-lymphocyte-specific membrane protein that plays a role in the regulation of cellular calcium influx necessary for the development, differentiation, and activation of B-lymphocytes. Functions as a store-operated calcium (SOC) channel component promoting calcium influx after activation by the B-cell receptor/BCR. The protein is B-lymphocyte antigen CD20 (Ms4a1) of Mus musculus (Mouse).